The sequence spans 1506 residues: Phosphatidylinositol 3-kinase C2 domain-containing subunit gamma (1506 aa).

The disordered stretch occupies residues 1–34; it reads MAYSWQTEPNRTEPQEDGSDTQQFHHTNQHLSSR. Residues 20–34 are compositionally biased toward polar residues; that stretch reads DTQQFHHTNQHLSSR. Residues 285 to 371 enclose the PI3K-RBD domain; that stretch reads DTKFRVKISI…IQLHLQKNRD (87 aa). The 149-residue stretch at 541 to 689 folds into the C2 PI3K-type domain; sequence LQSHLSFTVC…SPLTLQIDFP (149 aa). One can recognise a PIK helical domain in the interval 704–880; sequence RTDHEEPPRE…QELLAALQFC (177 aa). Residues 949–1227 enclose the PI3K/PI4K catalytic domain; that stretch reads DRDACSYFTS…KIKESLECFP (279 aa). A G-loop region spans residues 955-961; the sequence is YFTSNAS. The catalytic loop stretch occupies residues 1091 to 1099; it reads GVCDRHNDN. The interval 1110–1136 is activation loop; it reads HIDFGKFLGHAQTFGGIKRDRAPFIFT. The 113-residue stretch at 1260–1372 folds into the PX domain; that stretch reads LNKTRTIQRV…SFFLSEHIQP (113 aa). Positions 1381 to 1506 constitute a C2 domain; the sequence is DPGENSLDKS…KWYPLGNSII (126 aa).

Belongs to the PI3/PI4-kinase family. In terms of tissue distribution, expressed predominantly in liver. Also found in kidney, lung and lymphoid tissue. Down-regulated in BeF3 cells expressing the BCR-ABL oncogene p185.

It localises to the membrane. The catalysed reaction is a 1,2-diacyl-sn-glycero-3-phospho-(1D-myo-inositol 4-phosphate) + ATP = a 1,2-diacyl-sn-glycero-3-phospho-(1D-myo-inositol-3,4-bisphosphate) + ADP + H(+). The enzyme catalyses a 1,2-diacyl-sn-glycero-3-phospho-(1D-myo-inositol) + ATP = a 1,2-diacyl-sn-glycero-3-phospho-(1D-myo-inositol-3-phosphate) + ADP + H(+). Generates phosphatidylinositol 3-phosphate (PtdIns3P) and phosphatidylinositol 3,4-bisphosphate (PtdIns(3,4)P2) that act as second messengers. May play a role in SDF1A-stimulated chemotaxis. This Mus musculus (Mouse) protein is Phosphatidylinositol 3-kinase C2 domain-containing subunit gamma (Pik3c2g).